Consider the following 411-residue polypeptide: Arginine deiminase (411 aa).

The Amidino-cysteine intermediate role is filled by Cys401.

The protein belongs to the arginine deiminase family.

Its subcellular location is the cytoplasm. The catalysed reaction is L-arginine + H2O = L-citrulline + NH4(+). It functions in the pathway amino-acid degradation; L-arginine degradation via ADI pathway; carbamoyl phosphate from L-arginine: step 1/2. The polypeptide is Arginine deiminase (Streptococcus equi subsp. zooepidemicus (strain H70)).